The following is a 367-amino-acid chain: Phosphoribosylaminoimidazole-succinocarboxamide synthase (367 aa).

Belongs to the SAICAR synthetase family.

It carries out the reaction 5-amino-1-(5-phospho-D-ribosyl)imidazole-4-carboxylate + L-aspartate + ATP = (2S)-2-[5-amino-1-(5-phospho-beta-D-ribosyl)imidazole-4-carboxamido]succinate + ADP + phosphate + 2 H(+). It functions in the pathway purine metabolism; IMP biosynthesis via de novo pathway; 5-amino-1-(5-phospho-D-ribosyl)imidazole-4-carboxamide from 5-amino-1-(5-phospho-D-ribosyl)imidazole-4-carboxylate: step 1/2. The polypeptide is Phosphoribosylaminoimidazole-succinocarboxamide synthase (Shewanella sp. (strain MR-4)).